A 406-amino-acid chain; its full sequence is Succinylornithine transaminase (406 aa).

Lysine 252 carries the post-translational modification N6-(pyridoxal phosphate)lysine.

It belongs to the class-III pyridoxal-phosphate-dependent aminotransferase family. AstC subfamily. Requires pyridoxal 5'-phosphate as cofactor.

The enzyme catalyses N(2)-succinyl-L-ornithine + 2-oxoglutarate = N-succinyl-L-glutamate 5-semialdehyde + L-glutamate. It participates in amino-acid degradation; L-arginine degradation via AST pathway; L-glutamate and succinate from L-arginine: step 3/5. In terms of biological role, catalyzes the transamination of N(2)-succinylornithine and alpha-ketoglutarate into N(2)-succinylglutamate semialdehyde and glutamate. Can also act as an acetylornithine aminotransferase. This is Succinylornithine transaminase from Citrobacter koseri (strain ATCC BAA-895 / CDC 4225-83 / SGSC4696).